A 613-amino-acid chain; its full sequence is MADGVFQGAIGIDLGTTYSCVATYESSVEIIANEQGNRVTPSFVAFTPEERLIGDAAKNQAALNPKNTVFDAKRLIGRRFDEESVQNDMKTWPFKVVDVEGAPVIEVEYLGETKQFSPQEISSMVLTKMKEIAEAKIGKKVEKAVITVPAYFNDAQRQATKDAGAISGLNVLRIINEPTAAAIAYGLGAGKSDKERHVLIFDLGGGTFDVSLLHIAGGVYTVKSTSGNTHLGGQDFDTNLLEHFKSDFKKKTGLDISNDARALRRLRTAAERAKRTLSSVTQTTVEVDSLFDGEDFEASLTRARFEDLNAALFKSTLEPVEQVLKDAKISKSQIDEVVLVGGSTRIPKVQKLLSDFFDGKQLEKSINPDEAVAYGAAVQGAILTGQSTSDETKDLLLLDVAPLSLGVGMQGDIFGVVVPRNTTVPTIKRRTFTTVGDNQTTVQFPVYQGERVNCKENTLLGEFDLKNIPPMQAGEPVLEAIFEVDANGILKVTAVEKSTGKSANITISNAVGRLSSEDIEKMVNQAEEFKAADEAFAKRHEAKQRLESYVASIEQTVTDPVLSSKLKRGSKTKIEAALADALAALQIEDGSTEEYRKAEVGLKRVVTKAMSSR.

A nucleotide binding domain (NBD) region spans residues Met-1–Glu-391. ATP contacts are provided by residues Thr-16–Tyr-18, Lys-73, Gly-205–Thr-207, Glu-271–Ser-278, and Gly-342. An inter-domain linker region spans residues Thr-392 to Pro-402. Positions Leu-403–Arg-613 are substrate binding domain (SBD). The lid domain (SBDalpha) stretch occupies residues Ser-516 to Ser-612. Residues Ile-574–Leu-582 carry the Nuclear export signal motif.

The protein belongs to the heat shock protein 70 family. Ssb-type Hsp70 subfamily. In terms of assembly, binds to ribosomes. Binds close to the ribosomal tunnel exit via contacts with both ribosomal proteins and rRNA. Directly interacts with nascent polypeptides. This interaction is dependent on the ribosome-associated complex (RAC). Interacts with SSE1. Interacts with FES1.

The protein resides in the cytoplasm. It catalyses the reaction ATP + H2O = ADP + phosphate + H(+). Functionally, ribosome-bound, Hsp70-type chaperone that assists in the cotranslational folding of newly synthesized proteins in the cytosol. Stimulates folding by interacting with nascent chains, binding to short, largely hydrophobic sequences exposed by unfolded proteins, thereby stabilizing longer, more slowly translated, and aggregation-prone nascent polypeptides and domains that cannot fold stably until fully synthesized. The Hsp70-protein substrate interaction depends on ATP-binding and on allosteric regulation between the NBD and the SBD. The ATP-bound state is characterized by a fast exchange rate of substrate (low affinity state), while in the ADP-bound state exchange is much slower (high affinity state). During the Hsp70 cycle, the chaperone switches between the ATP-bound state (open conformation) and the ADP-bound state (closed conformation) by major conformational rearrangements involving mainly the lid domain. Ssb cooperates with a specific Hsp40/Hsp70 co-chaperone termed the ribosome-associated complex (RAC), which stimulates the ATPase activity of the ribosome-associated pool of Ssbs and switches it to the high affinity substrate binding state. Hsp110 chaperone SSE1 and FES1 act as nucleotide exchange factors that cause substrate release. The polypeptide is Ribosome-associated molecular chaperone SSB1 (SSB1) (Nakaseomyces delphensis (Yeast)).